The chain runs to 375 residues: Odorant receptor 10 (375 aa).

The next 6 membrane-spanning stretches (helical) occupy residues 32–52, 58–78, 125–145, 167–187, 250–270, and 279–299; these read ISII…GHSW, VIIK…TLIL, NLAL…FTGV, IIYL…IPFT, YICF…LFLL, and IVIV…FYWH.

This sequence belongs to the insect chemoreceptor superfamily. Heteromeric odorant receptor channel (TC 1.A.69) family. As to expression, expressed in female antenna, maxillary palp and proboscis. Expressed in female body. Expressed in male tissues.

The protein resides in the cell membrane. Its function is as follows. Odorant receptor which complexes with Orco, a coreceptor, to form odorant-sensing units, providing sensitive and prolonged odorant signaling and calcium permeability. Can sense indole, 1-octen-3-ol, 3-methyindole and an insect repellent DEET. The protein is Odorant receptor 10 of Aedes albopictus (Asian tiger mosquito).